The chain runs to 601 residues: uncharacterized protein (601 aa).

The first 24 residues, 1–24, serve as a signal peptide directing secretion; that stretch reads MKLSSLPSGLGLASLLGLISSATA.

The protein localises to the membrane. This is an uncharacterized protein from Schizosaccharomyces pombe (strain 972 / ATCC 24843) (Fission yeast).